Consider the following 1038-residue polypeptide: MATSKPQRSPAEIEDIILRKIFYVTLTESTDSDPRIVYLEMTAAEILSEGKELLLSRDLMERVLIDRLSGDFSDAEPPFPYLIGCHRRAYDESKKIQSMKDKNLRSEMEIVTKQAKKLAVSYCRIHLGNPDMFGNSDKPSGGLDNRLKKRNVSPVLPLIFAEVGSGSLDMFGASSSGVQAPPGFLDEFFKDSDFDSLDSILKELYEDLRSTVINVSVLGDFQPPLRALKYLVSLPVGAKSLVSHEWWVPRGAYMNGRAMELTSILGPFFHISALPDNTLFKSQPDVGQQCFSEASERRPADLLSSFSTIKNFMNILYSGLHDVLMILLKSTDTRERVLQFLAEVINANASRAHIQVDPVSCASSGMFVNLSAVMLRLCEPFLDPHLTKRDKIDPKYAFCGHRLKLSDLTALHASSEEVTEWIGKDAMANANDAGRENGNESRLLQSKEATSSSSNASGQNAKSATKYTFICECFFMTARVLNLGLLKALSDFKHLAQDISRGEDNLATLKAMRDQAPSPQLELDISRMEKELELSSQEKLCHEAQILRDGDFIQRALSFYRLMVVWLVGLVGGFKMPLPSTCPMEFSCMPEHFVEDAMELLIFASRIPKALDGVPLDDFMNFIIMFMASPEYVRNPYLRAKMVEVLNCWMPRSSSSSSATSTLFEGHQLSLEYLVRNLLKLYVDIEFTGSHTQFYDKFNIRHNIAELLEYLWQVPSHRNAWRRIAKDEEKGVYLNFLNFLVNDSIYLLDESLNKILEIKQIEADMSNTAEWEQRPTQERQERTRLFHSQENIVRIDMKLANEDVTMLAFTSEEITAPFLLPEMVERVANMLNYFLLQLVGPQRKSLSLKDPEKYEFRPKQLLKQIVRIYVNLARGDTVNIFPGAISSDGRSYNEQLFNAGADVLRRIGEEGRIIQEFMELGTKAKAAASEALDAEAALGEIPDEFLDPIQYTLMRDPVILPSSRITVDRPIIQRHLLSDNHDPFNRAHLTSDMLIPDIELKAKIDEFVKSHQSKKRTSGEDSSNKERIQTTNSDMLID.

Disordered stretches follow at residues 430-459 and 1010-1038; these read ANDA…ASGQ and SHQS…MLID. The segment covering 446 to 459 has biased composition (low complexity); sequence SKEATSSSSNASGQ. Residues 940–1014 form the U-box domain; that stretch reads EIPDEFLDPI…DEFVKSHQSK (75 aa). The segment covering 1017–1028 has biased composition (basic and acidic residues); the sequence is TSGEDSSNKERI. Positions 1029-1038 are enriched in polar residues; sequence QTTNSDMLID.

Belongs to the ubiquitin conjugation factor E4 family.

It is found in the cytoplasm. It localises to the nucleus. The enzyme catalyses S-ubiquitinyl-[E2 ubiquitin-conjugating enzyme]-L-cysteine + [acceptor protein]-L-lysine = [E2 ubiquitin-conjugating enzyme]-L-cysteine + N(6)-ubiquitinyl-[acceptor protein]-L-lysine.. Its pathway is protein modification; protein ubiquitination. In terms of biological role, ubiquitin-protein ligase that may function as an E3 ligase in conjunction with specific E1 and E2 ligases. May also function as an E4 ligase mediating the assembly of polyubiquitin chain assembly on substrates monoubiquitinated by another E3 ubiquitin ligase. This is Probable ubiquitin conjugation factor E4 (PUB1) from Arabidopsis thaliana (Mouse-ear cress).